Here is a 375-residue protein sequence, read N- to C-terminus: Trichodiene synthase (375 aa).

This sequence belongs to the trichodiene synthase family.

The enzyme catalyses (2E,6E)-farnesyl diphosphate = trichodiene + diphosphate. Its pathway is sesquiterpene biosynthesis; trichothecene biosynthesis. TS is a member of the terpene cyclase group of enzymes. It catalyzes the isomerization and cyclization of farnesyl pyro-phosphate to form trichodiene, the first cyclic intermediate in the biosynthetic pathway for trichothecenes. It serves to branch trichothecene biosynthesis from the isoprenoid pathway. This is Trichodiene synthase (TRI5) from Fusarium mesoamericanum.